The sequence spans 829 residues: Leucine--tRNA ligase (829 aa).

The 'HIGH' region motif lies at 40–50; that stretch reads PYPSGNIHMGH. Positions 594-598 match the 'KMSKS' region motif; the sequence is KMSKS. Lys597 contributes to the ATP binding site.

This sequence belongs to the class-I aminoacyl-tRNA synthetase family.

The protein resides in the cytoplasm. The catalysed reaction is tRNA(Leu) + L-leucine + ATP = L-leucyl-tRNA(Leu) + AMP + diphosphate. The polypeptide is Leucine--tRNA ligase (Anaplasma marginale (strain St. Maries)).